The chain runs to 148 residues: Large ribosomal subunit protein uL22 (148 aa).

Belongs to the universal ribosomal protein uL22 family. Part of the 50S ribosomal subunit.

Functionally, this protein binds specifically to 23S rRNA; its binding is stimulated by other ribosomal proteins, e.g. L4, L17, and L20. It is important during the early stages of 50S assembly. It makes multiple contacts with different domains of the 23S rRNA in the assembled 50S subunit and ribosome. In terms of biological role, the globular domain of the protein is located near the polypeptide exit tunnel on the outside of the subunit, while an extended beta-hairpin is found that lines the wall of the exit tunnel in the center of the 70S ribosome. The sequence is that of Large ribosomal subunit protein uL22 from Thermosipho africanus (strain TCF52B).